The sequence spans 98 residues: Large ribosomal subunit protein bL21 (98 aa).

This sequence belongs to the bacterial ribosomal protein bL21 family. Part of the 50S ribosomal subunit. Contacts protein L20.

This protein binds to 23S rRNA in the presence of protein L20. The polypeptide is Large ribosomal subunit protein bL21 (Chloroherpeton thalassium (strain ATCC 35110 / GB-78)).